The following is a 585-amino-acid chain: UvrABC system protein C (585 aa).

A GIY-YIG domain is found at 15 to 90 (AEPGVYQFLE…IKRHQPRYNV (76 aa)). Residues 198 to 233 (GILADPLRQEMQAAATAEEFERAANIRDRLAVIESF) form the UVR domain.

The protein belongs to the UvrC family. Interacts with UvrB in an incision complex.

The protein resides in the cytoplasm. The UvrABC repair system catalyzes the recognition and processing of DNA lesions. UvrC both incises the 5' and 3' sides of the lesion. The N-terminal half is responsible for the 3' incision and the C-terminal half is responsible for the 5' incision. The protein is UvrABC system protein C of Haloquadratum walsbyi (strain DSM 16790 / HBSQ001).